Consider the following 92-residue polypeptide: Elongation factor 1-beta (92 aa).

It belongs to the EF-1-beta/EF-1-delta family.

Promotes the exchange of GDP for GTP in EF-1-alpha/GDP, thus allowing the regeneration of EF-1-alpha/GTP that could then be used to form the ternary complex EF-1-alpha/GTP/AAtRNA. The protein is Elongation factor 1-beta of Korarchaeum cryptofilum (strain OPF8).